The following is a 696-amino-acid chain: Methionine--tRNA ligase (696 aa).

The 'HIGH' region motif lies at 12–22 (PYANGPLHLGH). 4 residues coordinate Zn(2+): cysteine 143, cysteine 146, cysteine 156, and cysteine 159. The 'KMSKS' region motif lies at 330–334 (KMSKS). Lysine 333 provides a ligand contact to ATP. One can recognise a tRNA-binding domain in the interval 593 to 696 (DFAKLDLRIG…AGAQPGMPVR (104 aa)).

The protein belongs to the class-I aminoacyl-tRNA synthetase family. MetG type 1 subfamily. As to quaternary structure, homodimer. Zn(2+) serves as cofactor.

It is found in the cytoplasm. The catalysed reaction is tRNA(Met) + L-methionine + ATP = L-methionyl-tRNA(Met) + AMP + diphosphate. In terms of biological role, is required not only for elongation of protein synthesis but also for the initiation of all mRNA translation through initiator tRNA(fMet) aminoacylation. The chain is Methionine--tRNA ligase from Xanthomonas campestris pv. campestris (strain 8004).